We begin with the raw amino-acid sequence, 1338 residues long: P-type sodium-transporting ATPase4 (1338 aa).

The disordered stretch occupies residues 1 to 106 (MAARASADKL…KSISSVSQMH (106 aa)). Residues 55 to 69 (AEEKVAGHDGESPRR) show a composition bias toward basic and acidic residues. The segment covering 91 to 104 (GHSQLGKSISSVSQ) has biased composition (polar residues). Transmembrane regions (helical) follow at residues 229–249 (IFIQQFLSPVVLLLLVAAIAS), 255–275 (WVEGAAIFIIVTLNASLATYM), 418–438 (LGGMIGLIAICVLIIVVVVAI), 456–476 (IVLVAVGFAVSSIPEGLPMVV), 985–1005 (FVCFLLGTNIGEIIYLTIAIA), 1068–1088 (IFEAGCVLMSLALGLYLCTGV), 1261–1281 (MHLACSISATLTSLLTIVPGI), and 1288–1308 (CALPWYLYLFAIGCGFVNLIL).

Belongs to the cation transport ATPase (P-type) (TC 3.A.3) family.

The protein resides in the cell membrane. It carries out the reaction Na(+)(in) + ATP + H2O = Na(+)(out) + ADP + phosphate + H(+). With respect to regulation, inhibited by cipargamin, a synthetic spiroindolone. Inhibited by pyrazoleamide PA21A050, structurally unrelated to the spiroindolones. Inhibited by (+)-SJ733, a dihydroisoquinolone compound. In terms of biological role, sodium-exporting ATPase. Required for the extrusion of Na(+) from the parasites to maintain a low cytosolic concentration of Na(+). Required for maintaining the viability of extracellular parasites but not for intracellular growth, egress or invasion. Involved in parasite virulence. The sequence is that of P-type sodium-transporting ATPase4 from Toxoplasma gondii (strain ATCC 50861 / VEG).